We begin with the raw amino-acid sequence, 460 residues long: MTIFQKSFILLIIWNFSLFAFSDMKIEITHGINTAHPIAVIPFINNENITHELNNDNIEDIASIIAADLRNSGKFNTLPIAYLPYQPSKLTDIIPTFWEKLGINTVVLGAINIKNENYVISYQLIDTSNNPALVILDNQYEIEKKHLRYTAHTISDEIFEKLTGIKGVFCTRIAYILYTNNIKYAYELCTSDYDGHNQVSICRSSEPLMSPAWSPDGKKLAYVTFASGHSELIIQTLTNRSIDNIIQFPNHNGAPAWSPDGKKLAFSLSKTGSLNLYIMDLSSNNIQQITSNRYNNTEPSWFPDSQNLAYTSDQGGVPQVYKININNNRDSHRISWLNGSNQKPNISMDGTFMVMVNRNKGKQYISKLNFLTGEEETLTADSVLADTPSISPNGIMFMYSSIILNNSSSELYLDKKFTNIPDNNQSILSLASIDGKFKAHLNGSTGSIRFPTWSSLSCSY.

Residues 1–22 (MTIFQKSFILLIIWNFSLFAFS) form the signal peptide.

This sequence belongs to the TolB family. In terms of assembly, the Tol-Pal system is composed of five core proteins: the inner membrane proteins TolA, TolQ and TolR, the periplasmic protein TolB and the outer membrane protein Pal. They form a network linking the inner and outer membranes and the peptidoglycan layer.

The protein localises to the periplasm. Its function is as follows. Part of the Tol-Pal system, which plays a role in outer membrane invagination during cell division and is important for maintaining outer membrane integrity. TolB occupies a key intermediary position in the Tol-Pal system because it communicates directly with both membrane-embedded components, Pal in the outer membrane and TolA in the inner membrane. This is Tol-Pal system protein TolB from Blochmanniella floridana.